A 262-amino-acid polypeptide reads, in one-letter code: Flap endonuclease Xni (262 aa).

Mg(2+) is bound at residue Asp-109. The 91-residue stretch at Leu-165–Lys-255 folds into the 5'-3' exonuclease domain. K(+)-binding residues include Leu-176, Ala-177, Ile-187, and Val-190. Residues Gly-189–Ala-194 form an interaction with DNA region.

This sequence belongs to the Xni family. Mg(2+) is required as a cofactor. The cofactor is K(+).

Its function is as follows. Has flap endonuclease activity. During DNA replication, flap endonucleases cleave the 5'-overhanging flap structure that is generated by displacement synthesis when DNA polymerase encounters the 5'-end of a downstream Okazaki fragment. This is Flap endonuclease Xni from Aliivibrio fischeri (strain MJ11) (Vibrio fischeri).